The chain runs to 414 residues: Serine/threonine transporter SstT (414 aa).

Helical transmembrane passes span 16-36 (GSLV…AWIS), 46-66 (LGTL…LMLV), 84-104 (ILFL…VFSF), 143-163 (ALLN…GFAL), 180-200 (AVTF…FGLV), 219-239 (LVVL…LLVF), 300-320 (MAGA…TLGV), and 332-352 (VVAS…LLLI).

Belongs to the dicarboxylate/amino acid:cation symporter (DAACS) (TC 2.A.23) family.

Its subcellular location is the cell inner membrane. The catalysed reaction is L-serine(in) + Na(+)(in) = L-serine(out) + Na(+)(out). It carries out the reaction L-threonine(in) + Na(+)(in) = L-threonine(out) + Na(+)(out). Functionally, involved in the import of serine and threonine into the cell, with the concomitant import of sodium (symport system). The protein is Serine/threonine transporter SstT of Salmonella schwarzengrund (strain CVM19633).